The chain runs to 352 residues: Phosphoribosylformylglycinamidine cyclo-ligase (352 aa).

Belongs to the AIR synthase family.

It is found in the cytoplasm. It catalyses the reaction 2-formamido-N(1)-(5-O-phospho-beta-D-ribosyl)acetamidine + ATP = 5-amino-1-(5-phospho-beta-D-ribosyl)imidazole + ADP + phosphate + H(+). The protein operates within purine metabolism; IMP biosynthesis via de novo pathway; 5-amino-1-(5-phospho-D-ribosyl)imidazole from N(2)-formyl-N(1)-(5-phospho-D-ribosyl)glycinamide: step 2/2. The sequence is that of Phosphoribosylformylglycinamidine cyclo-ligase from Stenotrophomonas maltophilia (strain R551-3).